The sequence spans 174 residues: MDITIHNPLIRRPLFSWLTPSRIFDQIFGEHLQESELLPTSPSLSPFLMRSPFFRMPSWLETGLSEMRLEKDKFSVNLDVKHFSPEELKVKVLGDMIEIHGKHEERQDEHGFIAREFSRKYRIPADVDPLTITSSLSLDGVLTVSAPRKQSDVPERSIPITREEKPAIAGSQRK.

M1 is subject to N-acetylmethionine. In terms of domain architecture, sHSP spans 55–163 (RMPSWLETGL…PERSIPITRE (109 aa)). Zn(2+) contacts are provided by H82, H103, E105, and H110. The disordered stretch occupies residues 148 to 174 (RKQSDVPERSIPITREEKPAIAGSQRK). Residues 149 to 166 (KQSDVPERSIPITREEKP) show a composition bias toward basic and acidic residues.

The protein belongs to the small heat shock protein (HSP20) family. Heteromer composed of three CRYAA and one CRYAB subunits. Aggregates with homologous proteins, including the small heat shock protein HSPB1, to form large heteromeric complexes. Inter-subunit bridging via zinc ions enhances stability, which is crucial as there is no protein turn over in the lens. Lens as well as other tissues.

Its function is as follows. May contribute to the transparency and refractive index of the lens. The polypeptide is Alpha-crystallin B chain (CRYAB) (Gallus gallus (Chicken)).